Here is a 59-residue protein sequence, read N- to C-terminus: Cytochrome c oxidase subunit 9, mitochondrial (59 aa).

Topologically, residues 2–8 are mitochondrial matrix; it reads TIAPITG. The chain crosses the membrane as a helical span at residues 9-44; sequence TIKRRVIMDIVLGFSLGGVMASYWWWGFHMDKINKR. At 45 to 56 the chain is on the mitochondrial intermembrane side; the sequence is EKFYAELAERKK. Positions 57 to 59 are cleaved as a propeptide — removed in mature form; the sequence is QEN.

This sequence belongs to the fungal cytochrome c oxidase subunit 7a family. Component of the cytochrome c oxidase (complex IV, CIV), a multisubunit enzyme composed of 12 subunits. The complex is composed of a catalytic core of 3 subunits COX1, COX2 and COX3, encoded in the mitochondrial DNA, and 9 supernumerary subunits COX4, COX5A (or COX5B), COX6, COX7, COX8, COX9, COX12, COX13 and COX26, which are encoded in the nuclear genome. The complex exists as a monomer or a dimer and forms supercomplexes (SCs) in the inner mitochondrial membrane with a dimer of ubiquinol-cytochrome c oxidoreductase (cytochrome b-c1 complex, complex III, CIII), resulting in 2 different assemblies (supercomplexes III(2)IV and III(2)IV(2)).

The protein localises to the mitochondrion inner membrane. It functions in the pathway energy metabolism; oxidative phosphorylation. Component of the cytochrome c oxidase, the last enzyme in the mitochondrial electron transport chain which drives oxidative phosphorylation. The respiratory chain contains 3 multisubunit complexes succinate dehydrogenase (complex II, CII), ubiquinol-cytochrome c oxidoreductase (cytochrome b-c1 complex, complex III, CIII) and cytochrome c oxidase (complex IV, CIV), that cooperate to transfer electrons derived from NADH and succinate to molecular oxygen, creating an electrochemical gradient over the inner membrane that drives transmembrane transport and the ATP synthase. Cytochrome c oxidase is the component of the respiratory chain that catalyzes the reduction of oxygen to water. Electrons originating from reduced cytochrome c in the intermembrane space (IMS) are transferred via the dinuclear copper A center (CU(A)) of COX2 and heme A of COX1 to the active site in COX1, a binuclear center (BNC) formed by heme A3 and copper B (CU(B)). The BNC reduces molecular oxygen to 2 water molecules using 4 electrons from cytochrome c in the IMS and 4 protons from the mitochondrial matrix. The chain is Cytochrome c oxidase subunit 9, mitochondrial (COX9) from Saccharomyces cerevisiae (strain ATCC 204508 / S288c) (Baker's yeast).